We begin with the raw amino-acid sequence, 818 residues long: ATM interactor (818 aa).

Residues 1-34 (MAATEAAAADSAGPAPGVPATPASTRGAAAASSP) show a composition bias toward low complexity. The interval 1–62 (MAATEAAAAD…RAAAPVPPAR (62 aa)) is disordered. A C2H2-type 1 zinc finger spans residues 80–105 (ILCTVRGCGKILPNSPALNMHLVKSH). The segment at 161-181 (HKCSKCSNSYGTEWDLKRHEE) adopts a C2H2-type 2; degenerate zinc-finger fold. Basic and acidic residues predominate over residues 210–221 (HEIPAEHRDPPS). Disordered regions lie at residues 210–284 (HEIP…ATPP) and 603–625 (DNRSLLSDTNPGPDAQLPAGSAQ). Positions 219 to 437 (PPSKKRKMES…PDSSVSSCSQ (219 aa)) are required for formation of RAD51 foci. Polar residues-rich tracts occupy residues 229 to 243 (YLQNQKLSSKTTEPL) and 603 to 612 (DNRSLLSDTN).

Interacts via its C-terminus with ATM. Interacts with DYNLL; this interaction inhibits ATMIN transcriptional activity and hence may play a role in a feedback loop whereby DYNLL1 inhibits transactivation of its own promoter by ATMIN. ATMIN.

The protein resides in the nucleus. Functionally, transcription factor. Plays a crucial role in cell survival and RAD51 foci formation in response to methylating DNA damage. Involved in regulating the activity of ATM in the absence of DNA damage. May play a role in stabilizing ATM. Binds to the DYNLL1 promoter and activates its transcription. This chain is ATM interactor, found in Mus musculus (Mouse).